Reading from the N-terminus, the 489-residue chain is Glycogen synthase (489 aa).

K15 contributes to the ADP-alpha-D-glucose binding site.

The protein belongs to the glycosyltransferase 1 family. Bacterial/plant glycogen synthase subfamily.

The catalysed reaction is [(1-&gt;4)-alpha-D-glucosyl](n) + ADP-alpha-D-glucose = [(1-&gt;4)-alpha-D-glucosyl](n+1) + ADP + H(+). It functions in the pathway glycan biosynthesis; glycogen biosynthesis. Synthesizes alpha-1,4-glucan chains using ADP-glucose. This Francisella tularensis subsp. tularensis (strain SCHU S4 / Schu 4) protein is Glycogen synthase.